Here is a 552-residue protein sequence, read N- to C-terminus: Probable ABC transporter ATP-binding/permease protein HI_0664 (552 aa).

The next 6 helical transmembrane spans lie at 22 to 42 (IMAF…FIMV), 52 to 72 (LNFD…VLAV), 139 to 159 (IAPI…FAQL), 162 to 182 (WFVL…PIIT), 253 to 273 (EVAV…LFSL), and 278 to 298 (FAAF…VIAL). In terms of domain architecture, ABC transmembrane type-1 spans 23-307 (MAFTITMGTL…LSNLSSNLLQ (285 aa)). The ABC transporter domain occupies 340–552 (IDVENVNFAY…VIGIENGRMS (213 aa)). 372-379 (GRSGSGKS) serves as a coordination point for ATP.

Belongs to the ABC transporter superfamily. Lipid exporter (TC 3.A.1.106) family.

Its subcellular location is the cell inner membrane. In Haemophilus influenzae (strain ATCC 51907 / DSM 11121 / KW20 / Rd), this protein is Probable ABC transporter ATP-binding/permease protein HI_0664.